Here is a 1026-residue protein sequence, read N- to C-terminus: Isoleucine--tRNA ligase (1026 aa).

The 'HIGH' region signature appears at 51 to 61 (PTANGRPHIGH). The 'KMSKS' region motif lies at 591–595 (KMSKS). An ATP-binding site is contributed by Lys-594.

It belongs to the class-I aminoacyl-tRNA synthetase family. IleS type 2 subfamily. As to quaternary structure, monomer. It depends on Zn(2+) as a cofactor.

It is found in the cytoplasm. The enzyme catalyses tRNA(Ile) + L-isoleucine + ATP = L-isoleucyl-tRNA(Ile) + AMP + diphosphate. In terms of biological role, catalyzes the attachment of isoleucine to tRNA(Ile). As IleRS can inadvertently accommodate and process structurally similar amino acids such as valine, to avoid such errors it has two additional distinct tRNA(Ile)-dependent editing activities. One activity is designated as 'pretransfer' editing and involves the hydrolysis of activated Val-AMP. The other activity is designated 'posttransfer' editing and involves deacylation of mischarged Val-tRNA(Ile). This is Isoleucine--tRNA ligase from Thermoplasma acidophilum (strain ATCC 25905 / DSM 1728 / JCM 9062 / NBRC 15155 / AMRC-C165).